Consider the following 205-residue polypeptide: Rho GDP-dissociation inhibitor (205 aa).

Over residues 1–11 (MSVNNEVSADQ) the composition is skewed to polar residues. A disordered region spans residues 1–31 (MSVNNEVSADQHNPELEDDTFEHGPPVSLGE). S63 is subject to Phosphoserine.

The protein belongs to the Rho GDI family.

It localises to the cytoplasm. The protein resides in the nucleus. Functionally, regulates the GDP/GTP exchange reaction of the Rho proteins by inhibiting the dissociation of GDP from them, and the subsequent binding of GTP to them. This is Rho GDP-dissociation inhibitor from Schizosaccharomyces pombe (strain 972 / ATCC 24843) (Fission yeast).